Reading from the N-terminus, the 537-residue chain is CTP synthase (537 aa).

Residues 1–265 (MVHFIFVTGG…DNKVLKFFNI (265 aa)) form an amidoligase domain region. Residue Ser-13 participates in CTP binding. UTP is bound at residue Ser-13. ATP is bound by residues 14–19 (SLGKGL) and Asp-71. 2 residues coordinate Mg(2+): Asp-71 and Glu-139. CTP contacts are provided by residues 146–148 (DIE) and Lys-222. Residue Lys-222 participates in UTP binding. Positions 290-536 (RIAIIAKYHK…IKAAIEYNKC (247 aa)) constitute a Glutamine amidotransferase type-1 domain. Gly-352 contributes to the L-glutamine binding site. Cys-379 acts as the Nucleophile; for glutamine hydrolysis in catalysis. L-glutamine contacts are provided by residues 380 to 383 (FGMQ), Glu-403, and Arg-464. Active-site residues include His-509 and Glu-511.

Belongs to the CTP synthase family. In terms of assembly, homotetramer.

It carries out the reaction UTP + L-glutamine + ATP + H2O = CTP + L-glutamate + ADP + phosphate + 2 H(+). It catalyses the reaction L-glutamine + H2O = L-glutamate + NH4(+). The enzyme catalyses UTP + NH4(+) + ATP = CTP + ADP + phosphate + 2 H(+). The protein operates within pyrimidine metabolism; CTP biosynthesis via de novo pathway; CTP from UDP: step 2/2. With respect to regulation, allosterically activated by GTP, when glutamine is the substrate; GTP has no effect on the reaction when ammonia is the substrate. The allosteric effector GTP functions by stabilizing the protein conformation that binds the tetrahedral intermediate(s) formed during glutamine hydrolysis. Inhibited by the product CTP, via allosteric rather than competitive inhibition. In terms of biological role, catalyzes the ATP-dependent amination of UTP to CTP with either L-glutamine or ammonia as the source of nitrogen. Regulates intracellular CTP levels through interactions with the four ribonucleotide triphosphates. The protein is CTP synthase of Rickettsia rickettsii (strain Iowa).